The following is a 396-amino-acid chain: Tyrosine--tRNA ligase (396 aa).

Positions P43–H52 match the 'HIGH' region motif. The short motif at K227–S231 is the 'KMSKS' region element. K230 contacts ATP. The region spanning T338–I396 is the S4 RNA-binding domain.

The protein belongs to the class-I aminoacyl-tRNA synthetase family. TyrS type 2 subfamily. Homodimer.

It localises to the cytoplasm. It catalyses the reaction tRNA(Tyr) + L-tyrosine + ATP = L-tyrosyl-tRNA(Tyr) + AMP + diphosphate + H(+). Catalyzes the attachment of tyrosine to tRNA(Tyr) in a two-step reaction: tyrosine is first activated by ATP to form Tyr-AMP and then transferred to the acceptor end of tRNA(Tyr). The protein is Tyrosine--tRNA ligase of Dehalococcoides mccartyi (strain CBDB1).